Reading from the N-terminus, the 380-residue chain is Elongation factor Ts, mitochondrial (380 aa).

This sequence belongs to the EF-Ts family.

The protein resides in the mitochondrion. Its function is as follows. Associates with the EF-Tu.GDP complex and induces the exchange of GDP to GTP. It remains bound to the aminoacyl-tRNA.EF-Tu.GTP complex up to the GTP hydrolysis stage on the ribosome. The chain is Elongation factor Ts, mitochondrial from Plasmodium chabaudi chabaudi.